The following is a 66-amino-acid chain: MAKGKDVRIRVILECNSCVRNDLNKESPGISRYITQKNRHNTPSRLELRKFCPYCYKHTIHGEIKK.

Belongs to the bacterial ribosomal protein bL33 family.

It is found in the plastid. The protein resides in the chloroplast. This chain is Large ribosomal subunit protein bL33c, found in Nandina domestica (Heavenly bamboo).